A 79-amino-acid polypeptide reads, in one-letter code: MAGGRRGGRAKRRKVCYFTSNGITHIDYKDVDLLRKFVSERGKILPRRVTGTNAKYQRKLTIAIKRARQMALLPYVTGE.

This sequence belongs to the bacterial ribosomal protein bS18 family. Part of the 30S ribosomal subunit. Forms a tight heterodimer with protein bS6.

Functionally, binds as a heterodimer with protein bS6 to the central domain of the 16S rRNA, where it helps stabilize the platform of the 30S subunit. The protein is Small ribosomal subunit protein bS18 of Bacillus velezensis (strain DSM 23117 / BGSC 10A6 / LMG 26770 / FZB42) (Bacillus amyloliquefaciens subsp. plantarum).